A 369-amino-acid polypeptide reads, in one-letter code: Type 2 DNA topoisomerase 6 subunit A (369 aa).

The Topo IIA-type catalytic domain maps to 11 to 149 (KGDALAREKL…FHMRPEEDGA (139 aa)). Residue Y106 is the O-(5'-phospho-DNA)-tyrosine intermediate of the active site. The Mg(2+) site is built by E202 and D254.

This sequence belongs to the TOP6A family. Homodimer. Heterotetramer of two Top6A and two Top6B chains. Requires Mg(2+) as cofactor.

It catalyses the reaction ATP-dependent breakage, passage and rejoining of double-stranded DNA.. Relaxes both positive and negative superturns and exhibits a strong decatenase activity. In Methanosarcina mazei (strain ATCC BAA-159 / DSM 3647 / Goe1 / Go1 / JCM 11833 / OCM 88) (Methanosarcina frisia), this protein is Type 2 DNA topoisomerase 6 subunit A.